Here is a 63-residue protein sequence, read N- to C-terminus: Hyphancin-3E (63 aa).

The first 22 residues, 1–22, serve as a signal peptide directing secretion; sequence MNFSRILFFVFTCFVALASVSG. A propeptide spans 23 to 26 (removed by a dipeptidylpeptidase); sequence APEP. Leu-61 carries the leucine amide modification.

The protein belongs to the cecropin family.

It localises to the secreted. Functionally, has antibacterial activity. This Hyphantria cunea (Fall webworm moth) protein is Hyphancin-3E.